A 453-amino-acid chain; its full sequence is Putative F-box/FBD/LRR-repeat protein At1g66290 (453 aa).

The interval 1 to 28 (MDEDGERRVRTKRSCSPESSDNGSGDEV) is disordered. The segment covering 14 to 23 (SCSPESSDNG) has biased composition (polar residues). An F-box domain is found at 28 to 81 (VDWISDLPEALIVLVLLNLPTKDVIKTSVLSTKWRNIWRYVPRLDLDNRHFTEF). LRR repeat units lie at residues 155 to 179 (SLKL…VLVL), 210 to 235 (LDNV…SSKS), 246 to 269 (APKL…NLSS), 305 to 329 (LSRV…RCEP), and 358 to 381 (CSNL…IISE). One can recognise an FBD domain in the interval 373–423 (RKRTSIISEPRCLLSSLEYVKIEFALDKGKMELVRYLLENSPILKKLTLSL).

In Arabidopsis thaliana (Mouse-ear cress), this protein is Putative F-box/FBD/LRR-repeat protein At1g66290.